Consider the following 289-residue polypeptide: Iodotyrosine deiodinase 1 (289 aa).

The chain crosses the membrane as a helical span at residues 1–21; sequence MYFLTPILVAILCILVVWIFK. A compositionally biased stretch (basic and acidic residues) spans 47–58; sequence DLKDSSDLHQAE. Positions 47–69 are disordered; that stretch reads DLKDSSDLHQAEEDADEWQESEE. Over residues 59–69 the composition is skewed to acidic residues; sequence EDADEWQESEE. Residues 100 to 104, Ser128, and 128 to 129 each bind FMN; these read RRSVR and SG. 3,5-diiodo-L-tyrosine contacts are provided by Ala130, Glu157, Tyr161, and Lys182. 3-iodo-L-tyrosine-binding residues include Ala130, Glu157, Tyr161, and Lys182. FMN-binding positions include 237–239 and Arg279; that span reads TTT.

Belongs to the nitroreductase family. In terms of assembly, homodimer. It depends on FMN as a cofactor.

It localises to the cell membrane. The protein localises to the cytoplasmic vesicle membrane. The enzyme catalyses 2 iodide + L-tyrosine + 2 NADP(+) = 3,5-diiodo-L-tyrosine + 2 NADPH + H(+). The catalysed reaction is iodide + L-tyrosine + NADP(+) = 3-iodo-L-tyrosine + NADPH. It carries out the reaction 3-iodo-L-tyrosine + iodide + NADP(+) = 3,5-diiodo-L-tyrosine + NADPH + H(+). It catalyses the reaction L-tyrosine + chloride + NADP(+) = 3-chloro-L-tyrosine + NADPH. The enzyme catalyses bromide + L-tyrosine + NADP(+) = 3-bromo-L-tyrosine + NADPH. Its function is as follows. Catalyzes the dehalogenation of halotyrosines such as 3-bromo-L-tyrosine, 3-chloro-L-tyrosine, 3-iodo-L-tyrosine and 3,5-diiodo-L-tyrosine. During thyroid hormone biosynthesis, facilitates iodide salvage by catalysing the oxidative NADPH-dependent deiodination of the halogenated by-products of thyroid hormone production, monoiodotyrosine (L-MIT) and diiodotyrosine (L-DIT). The scavanged iodide can then reenter the hormone-producing pathways. Acts more efficiently on 3-iodo-L-tyrosine than 3,5-diiodo-L-tyrosine. This Pongo abelii (Sumatran orangutan) protein is Iodotyrosine deiodinase 1 (IYD).